We begin with the raw amino-acid sequence, 1109 residues long: Protein phosphatase 1 regulatory subunit 3A (1109 aa).

Residues Ser-40 and Ser-44 each carry the phosphoserine; by GSK3 modification. The residue at position 48 (Ser-48) is a Phosphoserine; by PKA and ISPK. A Phosphoserine modification is found at Ser-51. At Thr-58 the chain carries Phosphothreonine. Positions 64-67 (RRVS) match the PP1-binding motif motif. Ser-67 bears the Phosphoserine; by PKA mark. The region spanning 124-232 (QLQVQKAMLE…NNNGTNYTLV (109 aa)) is the CBM21 domain. A compositionally biased stretch (basic and acidic residues) spans 236 to 251 (KEPEPEPGKPLEEAPS). 4 disordered regions span residues 236–278 (KEPE…NFEN), 340–424 (GKNT…SDGS), 436–455 (DDNA…CSFP), and 493–517 (YFKK…KEKR). 3 stretches are compositionally biased toward polar residues: residues 340–352 (GKNT…SNIP), 360–384 (KNQS…SAES), and 396–406 (YSSGNESSHQP). Residue Ser-843 is modified to Phosphoserine. Disordered stretches follow at residues 945-985 (SATE…RKEK) and 1011-1048 (SREN…ETQD). Residues 951–963 (YNCSPTRETQGQP) show a composition bias toward polar residues. 2 stretches are compositionally biased toward basic and acidic residues: residues 966 to 985 (KPEE…RKEK) and 1011 to 1034 (SREN…KEFE). Polar residues predominate over residues 1035–1048 (SSASSSLPVQETQD). A helical transmembrane segment spans residues 1066-1086 (FLLFLMFLVTVYHYDLMIGLA).

In terms of assembly, interacts with PPP1CC catalytic subunit of PP1, and associates with glycogen. In terms of processing, phosphorylation at Ser-48 by ISPK stimulates the dephosphorylation of glycogen synthase and phosphorylase kinase. Skeletal muscle, diaphragm and cardiac muscle.

It localises to the membrane. Seems to act as a glycogen-targeting subunit for PP1. PP1 is essential for cell division, and participates in the regulation of glycogen metabolism, muscle contractility and protein synthesis. Plays an important role in glycogen synthesis but is not essential for insulin activation of glycogen synthase. The protein is Protein phosphatase 1 regulatory subunit 3A (PPP1R3A) of Oryctolagus cuniculus (Rabbit).